The following is a 42-amino-acid chain: Delta-actinopoditoxin-Mb1a (42 aa).

4 disulfide bridges follow: cysteine 1–cysteine 15, cysteine 8–cysteine 20, cysteine 14–cysteine 31, and cysteine 16–cysteine 42.

This sequence belongs to the neurotoxin 06 (delta-actx) family. As to expression, expressed by the venom gland.

The protein localises to the secreted. Functionally, neurotoxin that slows the inactivation of vertebrate tetrodotoxin-sensitive voltage-gated sodium channels (Nav) and most likely insect sodium channels presumably by binding to site 3 of the channel. Effects are an increase in resting tension, a muscle fasciculation and a decrease in indirect twitch tension. It fails to affect tetrodotoxin-resistant sodium currents. In vivo, is lethal to both vertebrates and insects. The polypeptide is Delta-actinopoditoxin-Mb1a (Missulena bradleyi (Eastern mouse spider)).